We begin with the raw amino-acid sequence, 734 residues long: Photosystem I P700 chlorophyll a apoprotein A2 (734 aa).

Transmembrane regions (helical) follow at residues 46–69 (IFAS…FHVA), 135–158 (LYQG…LHLQ), 175–199 (LNHH…HVAI), 273–291 (IAHH…GHMY), 330–353 (LHFQ…QHMY), 369–395 (AALY…IFLI), 417–439 (AIIS…LYVH), and 517–535 (FLVH…LILV). Cys-559 and Cys-568 together coordinate [4Fe-4S] cluster. 2 consecutive transmembrane segments (helical) span residues 575 to 596 (AFYL…YWHW) and 643 to 665 (LSVW…MFLI). 3 residues coordinate chlorophyll a: His-654, Met-662, and Tyr-670. Trp-671 serves as a coordination point for phylloquinone. Residues 707 to 727 (VVGLAHFTVGYFLTYAAFLIA) traverse the membrane as a helical segment.

The protein belongs to the PsaA/PsaB family. The PsaA/B heterodimer binds the P700 chlorophyll special pair and subsequent electron acceptors. PSI consists of a core antenna complex that captures photons, and an electron transfer chain that converts photonic excitation into a charge separation. The cyanobacterial PSI reaction center is composed of one copy each of PsaA,B,C,D,E,F,I,J,K,L,M and X, and forms trimeric complexes. PSI electron transfer chain: 5 chlorophyll a, 1 chlorophyll a', 2 phylloquinones and 3 4Fe-4S clusters. PSI core antenna: 90 chlorophyll a, 22 carotenoids, 3 phospholipids and 1 galactolipid. P700 is a chlorophyll a/chlorophyll a' dimer, A0 is one or more chlorophyll a, A1 is one or both phylloquinones and FX is a shared 4Fe-4S iron-sulfur center. is required as a cofactor.

It localises to the cellular thylakoid membrane. It carries out the reaction reduced [plastocyanin] + hnu + oxidized [2Fe-2S]-[ferredoxin] = oxidized [plastocyanin] + reduced [2Fe-2S]-[ferredoxin]. PsaA and PsaB bind P700, the primary electron donor of photosystem I (PSI), as well as the electron acceptors A0, A1 and FX. PSI is a plastocyanin/cytochrome c6-ferredoxin oxidoreductase, converting photonic excitation into a charge separation, which transfers an electron from the donor P700 chlorophyll pair to the spectroscopically characterized acceptors A0, A1, FX, FA and FB in turn. Oxidized P700 is reduced on the lumenal side of the thylakoid membrane by plastocyanin or cytochrome c6. This Synechococcus elongatus (strain ATCC 33912 / PCC 7942 / FACHB-805) (Anacystis nidulans R2) protein is Photosystem I P700 chlorophyll a apoprotein A2.